Reading from the N-terminus, the 557-residue chain is Ribonuclease J 2 (557 aa).

Residues His-76, His-78, His-144, and Glu-166 each contribute to the Zn(2+) site. 366–370 (HASSH) contributes to the substrate binding site.

This sequence belongs to the metallo-beta-lactamase superfamily. RNA-metabolizing metallo-beta-lactamase-like family. Bacterial RNase J subfamily. Homodimer. Component of a possible RNA degradosome complex composed of cshA, eno, pfkA, pnp, rnjA, rnjB, rnpA and rny. Interacts specifically with RNase J1. It depends on Zn(2+) as a cofactor.

Its subcellular location is the cytoplasm. An RNase that has 5'-3' exonuclease and endonuclease activity, with the exonuclease activity probably being most important in vivo. Involved in maturation of 16S rRNA, rnpB (the RNA component of RNase P) maturation and degradation, and mRNA maturation and/or decay. This subunit probably plays a structural rather than enzymatic role as mutation of its putative active site gives no phenotype, and its deletion is partially complemented by inactive RNase J1. The sequence is that of Ribonuclease J 2 from Staphylococcus aureus (strain NCTC 8325 / PS 47).